Here is a 490-residue protein sequence, read N- to C-terminus: Glutamyl-tRNA(Gln) amidotransferase subunit A (490 aa).

Catalysis depends on charge relay system residues K78 and S153. S177 acts as the Acyl-ester intermediate in catalysis.

It belongs to the amidase family. GatA subfamily. In terms of assembly, heterotrimer of A, B and C subunits.

It carries out the reaction L-glutamyl-tRNA(Gln) + L-glutamine + ATP + H2O = L-glutaminyl-tRNA(Gln) + L-glutamate + ADP + phosphate + H(+). In terms of biological role, allows the formation of correctly charged Gln-tRNA(Gln) through the transamidation of misacylated Glu-tRNA(Gln) in organisms which lack glutaminyl-tRNA synthetase. The reaction takes place in the presence of glutamine and ATP through an activated gamma-phospho-Glu-tRNA(Gln). The chain is Glutamyl-tRNA(Gln) amidotransferase subunit A from Bdellovibrio bacteriovorus (strain ATCC 15356 / DSM 50701 / NCIMB 9529 / HD100).